The sequence spans 62 residues: Large ribosomal subunit protein uL29 (62 aa).

Belongs to the universal ribosomal protein uL29 family.

The chain is Large ribosomal subunit protein uL29 from Geobacter metallireducens (strain ATCC 53774 / DSM 7210 / GS-15).